The chain runs to 93 residues: UPF0298 protein GWCH70_0997 (93 aa).

This sequence belongs to the UPF0298 family.

The protein resides in the cytoplasm. This is UPF0298 protein GWCH70_0997 from Geobacillus sp. (strain WCH70).